We begin with the raw amino-acid sequence, 807 residues long: Glycerol-3-phosphate acyltransferase (807 aa).

The HXXXXD motif signature appears at Cys-308–Met-313.

This sequence belongs to the GPAT/DAPAT family.

The protein resides in the cell inner membrane. It catalyses the reaction sn-glycerol 3-phosphate + an acyl-CoA = a 1-acyl-sn-glycero-3-phosphate + CoA. The protein operates within phospholipid metabolism; CDP-diacylglycerol biosynthesis; CDP-diacylglycerol from sn-glycerol 3-phosphate: step 1/3. The sequence is that of Glycerol-3-phosphate acyltransferase from Shewanella woodyi (strain ATCC 51908 / MS32).